Consider the following 358-residue polypeptide: Peptide chain release factor 1 (358 aa).

Glutamine 233 is subject to N5-methylglutamine.

Belongs to the prokaryotic/mitochondrial release factor family. In terms of processing, methylated by PrmC. Methylation increases the termination efficiency of RF1.

The protein resides in the cytoplasm. Peptide chain release factor 1 directs the termination of translation in response to the peptide chain termination codons UAG and UAA. This is Peptide chain release factor 1 from Listeria innocua serovar 6a (strain ATCC BAA-680 / CLIP 11262).